Reading from the N-terminus, the 104-residue chain is Integration host factor subunit beta (104 aa).

The segment covering 83–95 has biased composition (basic and acidic residues); that stretch reads GKEMRERLNRDSG. Positions 83–104 are disordered; that stretch reads GKEMRERLNRDSGDDAPTSDTA.

Belongs to the bacterial histone-like protein family. Heterodimer of an alpha and a beta chain.

In terms of biological role, this protein is one of the two subunits of integration host factor, a specific DNA-binding protein that functions in genetic recombination as well as in transcriptional and translational control. This is Integration host factor subunit beta from Rhodopseudomonas palustris (strain ATCC BAA-98 / CGA009).